The following is a 184-amino-acid chain: Large ribosomal subunit protein uL22 (184 aa).

Belongs to the universal ribosomal protein uL22 family. As to quaternary structure, part of the 50S ribosomal subunit.

Functionally, this protein binds specifically to 23S rRNA. It makes multiple contacts with different domains of the 23S rRNA in the assembled 50S subunit and ribosome. Its function is as follows. The globular domain of the protein is located near the polypeptide exit tunnel on the outside of the subunit, while an extended beta-hairpin is found that lines the wall of the exit tunnel in the center of the 70S ribosome. The polypeptide is Large ribosomal subunit protein uL22 (Pyrobaculum calidifontis (strain DSM 21063 / JCM 11548 / VA1)).